Consider the following 499-residue polypeptide: Glutathione reductase, cytosolic (499 aa).

FAD contacts are provided by serine 35, glycine 36, glutamate 55, threonine 72, cysteine 73, and lysine 81. Serine 35 contributes to the glutathione binding site. A disulfide bond links cysteine 73 and cysteine 78. Tyrosine 130 contacts glutathione. Glycine 146 is an FAD binding site. 6 residues coordinate NADP(+): glycine 211, isoleucine 214, glutamate 217, arginine 234, arginine 240, and glycine 297. 2 residues coordinate FAD: aspartate 338 and threonine 346. Alanine 376 is an NADP(+) binding site. Residue histidine 472 coordinates FAD. Residue histidine 472 is the Proton acceptor of the active site.

The protein belongs to the class-I pyridine nucleotide-disulfide oxidoreductase family. In terms of assembly, homodimer. It depends on FAD as a cofactor.

The protein resides in the cytoplasm. The catalysed reaction is 2 glutathione + NADP(+) = glutathione disulfide + NADPH + H(+). In terms of biological role, catalyzes the reduction of glutathione disulfide (GSSG) to reduced glutathione (GSH). Constitutes the major mechanism to maintain a high GSH:GSSG ratio in the cytosol. This chain is Glutathione reductase, cytosolic, found in Arabidopsis thaliana (Mouse-ear cress).